The primary structure comprises 136 residues: Holo-[acyl-carrier-protein] synthase (136 aa).

The Mg(2+) site is built by D8 and E57.

This sequence belongs to the P-Pant transferase superfamily. AcpS family. Mg(2+) serves as cofactor.

It localises to the cytoplasm. The catalysed reaction is apo-[ACP] + CoA = holo-[ACP] + adenosine 3',5'-bisphosphate + H(+). Functionally, transfers the 4'-phosphopantetheine moiety from coenzyme A to a Ser of acyl-carrier-protein. The protein is Holo-[acyl-carrier-protein] synthase of Methylobacterium radiotolerans (strain ATCC 27329 / DSM 1819 / JCM 2831 / NBRC 15690 / NCIMB 10815 / 0-1).